We begin with the raw amino-acid sequence, 2183 residues long: Genome polyprotein (2183 aa).

A lipid anchor (N-myristoyl glycine; by host) is attached at glycine 2. At glycine 2–glutamine 1493 the chain is on the cytoplasmic side. An amphipathic alpha-helix region spans residues phenylalanine 566 to valine 582. Active-site for protease 2A activity residues include histidine 870 and aspartate 888. Cysteine 905 and cysteine 907 together coordinate Zn(2+). Residue cysteine 959 is the For protease 2A activity of the active site. Zn(2+) contacts are provided by cysteine 965 and histidine 967. Residues asparagine 1099–glutamine 1171 form a membrane-binding region. The interval asparagine 1099 to threonine 1237 is oligomerization. The tract at residues alanine 1120–glutamine 1124 is RNA-binding. Residues glutamate 1203–asparagine 1359 enclose the SF3 helicase domain. Positions 1367, 1379, and 1384 each coordinate Zn(2+). A C4-type; degenerate zinc finger spans residues cysteine 1367–cysteine 1384. Residues glutamate 1411–valine 1418 form an RNA-binding region. The tract at residues leucine 1422–glutamine 1427 is oligomerization. The stretch at alanine 1494–tyrosine 1509 is an intramembrane region. At lysine 1510–phenylalanine 2183 the chain is on the cytoplasmic side. Tyrosine 1519 carries the post-translational modification O-(5'-phospho-RNA)-tyrosine. In terms of domain architecture, Peptidase C3 spans glycine 1539–phenylalanine 1717. Residues histidine 1578, glutamate 1609, and cysteine 1685 each act as for protease 3C activity in the active site. A RdRp catalytic domain is found at glycine 1948 to leucine 2064. Residues aspartate 1954 and aspartate 2050 each contribute to the Mg(2+) site.

This sequence belongs to the picornaviruses polyprotein family. In terms of assembly, interacts with capsid protein VP1 and capsid protein VP3 to form heterotrimeric protomers. As to quaternary structure, interacts with capsid protein VP0, and capsid protein VP3 to form heterotrimeric protomers. Five protomers subsequently associate to form pentamers which serve as building blocks for the capsid. Interacts with capsid protein VP2, capsid protein VP3 and capsid protein VP4 following cleavage of capsid protein VP0. Interacts with host CXADR. Interacts with capsid protein VP1 and capsid protein VP3 in the mature capsid. In terms of assembly, interacts with capsid protein VP0 and capsid protein VP1 to form heterotrimeric protomers. Five protomers subsequently associate to form pentamers which serve as building blocks for the capsid. Interacts with capsid protein VP4 in the mature capsid. Interacts with protein 2C; this interaction may be important for virion morphogenesis. As to quaternary structure, interacts with capsid protein VP1 and capsid protein VP3. Homodimer. In terms of assembly, homohexamer; forms a hexameric ring structure with 6-fold symmetry characteristic of AAA+ ATPases. Interacts (via N-terminus) with host RTN3 (via reticulon domain); this interaction is important for viral replication. Interacts with capsid protein VP3; this interaction may be important for virion morphogenesis. As to quaternary structure, interacts with protein 3CD. Homodimer. Interacts with host GBF1. Interacts (via GOLD domain) with host ACBD3 (via GOLD domain); this interaction allows the formation of a viral protein 3A/ACBD3 heterotetramer with a 2:2 stoichiometry, which will stimulate the recruitment of host PI4KB in order to synthesize PI4P at the viral RNA replication sites. In terms of assembly, interacts with RNA-directed RNA polymerase. As to quaternary structure, interacts with protein 3AB and with RNA-directed RNA polymerase. Interacts with Viral protein genome-linked and with protein 3CD. Mg(2+) is required as a cofactor. In terms of processing, specific enzymatic cleavages in vivo by the viral proteases yield processing intermediates and the mature proteins. Post-translationally, myristoylation is required for the formation of pentamers during virus assembly. Further assembly of 12 pentamers and a molecule of genomic RNA generates the provirion. During virion maturation, immature virions are rendered infectious following cleavage of VP0 into VP4 and VP2. This maturation seems to be an autocatalytic event triggered by the presence of RNA in the capsid and it is followed by a conformational change infectious virion. In terms of processing, myristoylation is required during RNA encapsidation and formation of the mature virus particle. Post-translationally, VPg is uridylylated by the polymerase into VPg-pUpU. This acts as a nucleotide-peptide primer for the genomic RNA replication.

The protein resides in the virion. Its subcellular location is the host cytoplasm. The protein localises to the host cytoplasmic vesicle membrane. It localises to the host nucleus. The enzyme catalyses a ribonucleoside 5'-triphosphate + H2O = a ribonucleoside 5'-diphosphate + phosphate + H(+). It catalyses the reaction Selective cleavage of Tyr-|-Gly bond in the picornavirus polyprotein.. The catalysed reaction is RNA(n) + a ribonucleoside 5'-triphosphate = RNA(n+1) + diphosphate. It carries out the reaction Selective cleavage of Gln-|-Gly bond in the poliovirus polyprotein. In other picornavirus reactions Glu may be substituted for Gln, and Ser or Thr for Gly.. With respect to regulation, replication or transcription is subject to high level of random mutations by the nucleotide analog ribavirin. Functionally, forms an icosahedral capsid of pseudo T=3 symmetry with capsid proteins VP2 and VP3. The capsid is 300 Angstroms in diameter, composed of 60 copies of each capsid protein and enclosing the viral positive strand RNA genome. Capsid protein VP1 mainly forms the vertices of the capsid. Capsid protein VP1 interacts with host CXADR to provide virion attachment to target host cells. This attachment induces virion internalization. Tyrosine kinases are probably involved in the entry process. After binding to its receptor, the capsid undergoes conformational changes. Capsid protein VP1 N-terminus (that contains an amphipathic alpha-helix) and capsid protein VP4 are externalized. Together, they shape a pore in the host membrane through which viral genome is translocated to host cell cytoplasm. Its function is as follows. Forms an icosahedral capsid of pseudo T=3 symmetry with capsid proteins VP2 and VP3. The capsid is 300 Angstroms in diameter, composed of 60 copies of each capsid protein and enclosing the viral positive strand RNA genome. In terms of biological role, lies on the inner surface of the capsid shell. After binding to the host receptor, the capsid undergoes conformational changes. Capsid protein VP4 is released, Capsid protein VP1 N-terminus is externalized, and together, they shape a pore in the host membrane through which the viral genome is translocated into the host cell cytoplasm. Component of immature procapsids, which is cleaved into capsid proteins VP4 and VP2 after maturation. Allows the capsid to remain inactive before the maturation step. Functionally, cysteine protease that cleaves viral polyprotein and specific host proteins. It is responsible for the autocatalytic cleavage between the P1 and P2 regions, which is the first cleavage occurring in the polyprotein. Also cleaves the host translation initiation factor EIF4G1, in order to shut down the capped cellular mRNA translation. Inhibits the host nucleus-cytoplasm protein and RNA trafficking by cleaving host members of the nuclear pores. Counteracts stress granule formation probably by antagonizing its assembly or promoting its dissassembly. Cleaves and inhibits host IFIH1/MDA5, thereby inhibiting the type-I IFN production and the establishment of the antiviral state. Cleaves and inhibits host MAVS, thereby inhibiting the type-I IFN production and the establishment of the antiviral state. Its function is as follows. Plays an essential role in the virus replication cycle by acting as a viroporin. Creates a pore in the host endoplasmic reticulum and as a consequence releases Ca2+ in the cytoplasm of infected cell. In turn, high levels of cytoplasmic calcium may trigger membrane trafficking and transport of viral ER-associated proteins to viroplasms, sites of viral genome replication. In terms of biological role, induces and associates with structural rearrangements of intracellular membranes. Displays RNA-binding, nucleotide binding and NTPase activities. May play a role in virion morphogenesis and viral RNA encapsidation by interacting with the capsid protein VP3. Localizes the viral replication complex to the surface of membranous vesicles. Together with protein 3CD binds the Cis-Active RNA Element (CRE) which is involved in RNA synthesis initiation. Acts as a cofactor to stimulate the activity of 3D polymerase, maybe through a nucleid acid chaperone activity. Functionally, localizes the viral replication complex to the surface of membranous vesicles. It inhibits host cell endoplasmic reticulum-to-Golgi apparatus transport and causes the disassembly of the Golgi complex, possibly through GBF1 interaction. This would result in depletion of MHC, trail receptors and IFN receptors at the host cell surface. Plays an essential role in viral RNA replication by recruiting ACBD3 and PI4KB at the viral replication sites, thereby allowing the formation of the rearranged membranous structures where viral replication takes place. Its function is as follows. Acts as a primer for viral RNA replication and remains covalently bound to viral genomic RNA. VPg is uridylylated prior to priming replication into VPg-pUpU. The oriI viral genomic sequence may act as a template for this. The VPg-pUpU is then used as primer on the genomic RNA poly(A) by the RNA-dependent RNA polymerase to replicate the viral genome. During genome replication, the VPg-RNA linkage is removed by the host TDP2, thereby accelerating replication. During the late stage of the replication cycle, host TDP2 is excluded from sites of viral RNA synthesis and encapsidation, allowing for the generation of progeny virions. In terms of biological role, involved in the viral replication complex and viral polypeptide maturation. It exhibits protease activity with a specificity and catalytic efficiency that is different from protease 3C. Protein 3CD lacks polymerase activity. Protein 3CD binds to the 5'UTR of the viral genome. Replicates the viral genomic RNA on the surface of intracellular membranes. May form linear arrays of subunits that propagate along a strong head-to-tail interaction called interface-I. Covalently attaches UMP to a tyrosine of VPg, which is used to prime RNA synthesis. The positive stranded RNA genome is first replicated at virus induced membranous vesicles, creating a dsRNA genomic replication form. This dsRNA is then used as template to synthesize positive stranded RNA genomes. ss(+)RNA genomes are either translated, replicated or encapsidated. Functionally, major viral protease that mediates proteolytic processing of the polyprotein. Cleaves host EIF5B, contributing to host translation shutoff. Also cleaves host PABPC1, contributing to host translation shutoff. Cleaves host NLRP1, triggers host N-glycine-mediated degradation of the autoinhibitory NLRP1 N-terminal fragment. This is Genome polyprotein from Coxsackievirus B4 (strain E2).